We begin with the raw amino-acid sequence, 373 residues long: Carboxylesterase/phospholipase LipF (373 aa).

Residues 116–118 (HGG) carry the Involved in the stabilization of the negatively charged intermediate by the formation of the oxyanion hole motif. Active-site residues include serine 186, glutamate 285, and histidine 315.

It belongs to the 'GDXG' lipolytic enzyme family.

It catalyses the reaction a carboxylic ester + H2O = an alcohol + a carboxylate + H(+). It carries out the reaction a 1,2-diacyl-sn-glycero-3-phosphocholine + H2O = phosphocholine + a 1,2-diacyl-sn-glycerol + H(+). Functionally, a short-chain esterase and phospholipase. The polypeptide is Carboxylesterase/phospholipase LipF (Mycobacterium tuberculosis (strain CDC 1551 / Oshkosh)).